The primary structure comprises 106 residues: Phosphoribosyl-ATP pyrophosphatase (106 aa).

Belongs to the PRA-PH family.

It localises to the cytoplasm. The catalysed reaction is 1-(5-phospho-beta-D-ribosyl)-ATP + H2O = 1-(5-phospho-beta-D-ribosyl)-5'-AMP + diphosphate + H(+). It functions in the pathway amino-acid biosynthesis; L-histidine biosynthesis; L-histidine from 5-phospho-alpha-D-ribose 1-diphosphate: step 2/9. In Lactiplantibacillus plantarum (strain ATCC BAA-793 / NCIMB 8826 / WCFS1) (Lactobacillus plantarum), this protein is Phosphoribosyl-ATP pyrophosphatase.